The following is a 184-amino-acid chain: F(420)H(2) dehydrogenase subunit B (184 aa).

Residues 1–20 (MGEVKETKTNNSKENPEEEV) are disordered. Positions 61, 62, 126, and 156 each coordinate [4Fe-4S] cluster.

Belongs to the complex I 20 kDa subunit family. In terms of assembly, the FPO complex is composed of at least 13 different subunits. FAD serves as cofactor. Requires [4Fe-4S] cluster as cofactor.

Its subcellular location is the cell inner membrane. It carries out the reaction methanophenazine + reduced coenzyme F420-(gamma-L-Glu)(n) = dihydromethanophenazine + oxidized coenzyme F420-(gamma-L-Glu)(n) + H(+). In terms of biological role, component of the F(420)H(2) dehydrogenase (FPO complex) which is part of the energy-conserving F(420)H(2):heterodisulfide oxidoreductase system. The membrane-bound electron transfer system of the complex plays an important role in the metabolism of methylotrophic methanogens when the organisms grow on methanol or methylamines. Catalyzes the oxidation of methanophenazine to dihydromethanophenazine. It shuttles electrons from F(420)H(2), via FAD and iron-sulfur (Fe-S) centers, to methanophenazine (an electron carrier in the membrane). It couples the redox reaction to proton translocation (for every two electrons transferred, two hydrogen ions are translocated across the cytoplasmic membrane), and thus conserves the redox energy in a proton gradient. It also catalyzes the oxidation of F(420)H(2) with quinones such as 2,3-dimethyl-1,4-naphthoquinone, 2-methyl-1,4-naphthoquinone and tetramethyl-p-benzoquinone. The chain is F(420)H(2) dehydrogenase subunit B (fpoB) from Methanosarcina mazei (strain ATCC BAA-159 / DSM 3647 / Goe1 / Go1 / JCM 11833 / OCM 88) (Methanosarcina frisia).